Here is a 126-residue protein sequence, read N- to C-terminus: MDPHETLVKNPYAHISIPRAHLRPELGQQRKAGPSSAESRPLPVRSCTLEPLEEAPGPKGTKGRPASQQPCKPCGSGQRPAGLAYAGPPPAQRGDDIAHHCWCCPCCSCCHCPRFCRCHSCCCVVS.

The tract at residues 1 to 89 (MDPHETLVKN…PAGLAYAGPP (89 aa)) is disordered.

The protein belongs to the CYSRT1 family. In terms of assembly, interacts with components of the late cornfied envelope (LCE).

Its subcellular location is the cornified envelope. Its function is as follows. Component of the stratum corneum that may contribute to epidermal antimicrobial host defenses. This is Cysteine-rich tail protein 1 (CYSRT1) from Bos taurus (Bovine).